The following is a 137-amino-acid chain: Large ribosomal subunit protein uL16 (137 aa).

This sequence belongs to the universal ribosomal protein uL16 family. In terms of assembly, part of the 50S ribosomal subunit.

In terms of biological role, binds 23S rRNA and is also seen to make contacts with the A and possibly P site tRNAs. The sequence is that of Large ribosomal subunit protein uL16 from Leuconostoc citreum (strain KM20).